The chain runs to 388 residues: uncharacterized protein (388 aa).

Cysteine 18, cysteine 24, cysteine 27, and cysteine 99 together coordinate [4Fe-4S] cluster. The S-adenosyl-L-methionine site is built by glutamine 212, glutamate 262, and asparagine 313. Residue cysteine 343 is the Nucleophile of the active site.

The protein belongs to the class I-like SAM-binding methyltransferase superfamily. RNA M5U methyltransferase family.

This is an uncharacterized protein from Bdellovibrio bacteriovorus (strain ATCC 15356 / DSM 50701 / NCIMB 9529 / HD100).